Here is a 345-residue protein sequence, read N- to C-terminus: Phosphoribosylformylglycinamidine cyclo-ligase (345 aa).

It belongs to the AIR synthase family.

The protein resides in the cytoplasm. It carries out the reaction 2-formamido-N(1)-(5-O-phospho-beta-D-ribosyl)acetamidine + ATP = 5-amino-1-(5-phospho-beta-D-ribosyl)imidazole + ADP + phosphate + H(+). It participates in purine metabolism; IMP biosynthesis via de novo pathway; 5-amino-1-(5-phospho-D-ribosyl)imidazole from N(2)-formyl-N(1)-(5-phospho-D-ribosyl)glycinamide: step 2/2. The protein is Phosphoribosylformylglycinamidine cyclo-ligase of Methylococcus capsulatus (strain ATCC 33009 / NCIMB 11132 / Bath).